The primary structure comprises 527 residues: EGF domain-specific O-linked N-acetylglucosamine transferase (527 aa).

The first 19 residues, 1–19 (MLMLLVFGVLLHEVPLSGQ), serve as a signal peptide directing secretion. The Required for optimal activity signature appears at 295 to 297 (DYD). N-linked (GlcNAc...) asparagine glycosylation is present at asparagine 354. The short motif at 524–527 (HDEL) is the Prevents secretion from ER element.

It belongs to the glycosyltransferase 61 family. As to expression, widely expressed. Expressed in brain, heart, kidney, lung, skeletal muscles and thymus. Highest expression is observed in lung and the lowest in skeletal muscles.

It is found in the endoplasmic reticulum lumen. It catalyses the reaction L-seryl-[protein] + UDP-N-acetyl-alpha-D-glucosamine = 3-O-(N-acetyl-beta-D-glucosaminyl)-L-seryl-[protein] + UDP + H(+). The catalysed reaction is L-threonyl-[protein] + UDP-N-acetyl-alpha-D-glucosamine = 3-O-(N-acetyl-beta-D-glucosaminyl)-L-threonyl-[protein] + UDP + H(+). In terms of biological role, catalyzes the transfer of a single N-acetylglucosamine from UDP-GlcNAc to a serine or threonine residue in extracellular proteins resulting in their modification with a beta-linked N-acetylglucosamine (O-GlcNAc). Specifically glycosylates the Thr residue located between the fifth and sixth conserved cysteines of folded EGF-like domains. This is EGF domain-specific O-linked N-acetylglucosamine transferase (Eogt) from Mus musculus (Mouse).